A 541-amino-acid polypeptide reads, in one-letter code: Chaperonin GroEL 2 (541 aa).

Residues 29–32 (TLGP), 86–90 (DGTTT), Gly-413, 476–478 (NAA), and Asp-492 contribute to the ATP site.

This sequence belongs to the chaperonin (HSP60) family. As to quaternary structure, forms a cylinder of 14 subunits composed of two heptameric rings stacked back-to-back. Interacts with the co-chaperonin GroES.

The protein resides in the secreted. It is found in the capsule. Its subcellular location is the cell surface. The protein localises to the cell wall. The enzyme catalyses ATP + H2O + a folded polypeptide = ADP + phosphate + an unfolded polypeptide.. Together with its co-chaperonin GroES, plays an essential role in assisting protein folding. The GroEL-GroES system forms a nano-cage that allows encapsulation of the non-native substrate proteins and provides a physical environment optimized to promote and accelerate protein folding. The protein is Chaperonin GroEL 2 of Mycobacterium avium (strain 104).